The following is a 150-amino-acid chain: MAGPVKDREAFQRLSFLYQAAHCVLSQNPENQALARFYCHTEKTIAKRLVLRQDPSVKRTLCRSCSSLLIPGLTCTQRQRRRKGQRWTVQTCLTCQRSQRFLNDPKHLLWGDRPEAQLENQADINPSEPLPNIADLPKENIQTQALNTSE.

Residue Ala-2 is modified to N-acetylalanine. Positions 62, 65, 92, and 95 each coordinate Zn(2+). Residues 121–150 (QADINPSEPLPNIADLPKENIQTQALNTSE) are disordered. Residues 140 to 150 (NIQTQALNTSE) show a composition bias toward polar residues.

Belongs to the eukaryotic/archaeal RNase P protein component 4 family. RNase P consists of a catalytic RNA moiety and about 10 protein subunits; POP1, POP4, POP5, POP7, RPP14, RPP21, RPP25, RPP30, RPP38 and RPP40. Within the RNase P complex, POP1, POP7 and RPP25 form the 'finger' subcomplex, POP5, RPP14, RPP40 and homodimeric RPP30 form the 'palm' subcomplex, and RPP21, POP4 and RPP38 form the 'wrist' subcomplex. All subunits of the RNase P complex interact with the catalytic RNA.

It localises to the nucleus. Its subcellular location is the nucleolus. Its function is as follows. Component of ribonuclease P, a ribonucleoprotein complex that generates mature tRNA molecules by cleaving their 5'-ends. The protein is Ribonuclease P protein subunit p21 (Rpp21) of Mus musculus (Mouse).